We begin with the raw amino-acid sequence, 187 residues long: Large ribosomal subunit protein uL5 (187 aa).

Belongs to the universal ribosomal protein uL5 family. Part of the 50S ribosomal subunit; part of the 5S rRNA/L5/L18/L25 subcomplex. Contacts the 5S rRNA and the P site tRNA. Forms a bridge to the 30S subunit in the 70S ribosome.

This is one of the proteins that bind and probably mediate the attachment of the 5S RNA into the large ribosomal subunit, where it forms part of the central protuberance. In the 70S ribosome it contacts protein S13 of the 30S subunit (bridge B1b), connecting the 2 subunits; this bridge is implicated in subunit movement. Contacts the P site tRNA; the 5S rRNA and some of its associated proteins might help stabilize positioning of ribosome-bound tRNAs. The sequence is that of Large ribosomal subunit protein uL5 from Roseobacter denitrificans (strain ATCC 33942 / OCh 114) (Erythrobacter sp. (strain OCh 114)).